The following is a 101-amino-acid chain: Phosphoribosyl-AMP cyclohydrolase (101 aa).

Mg(2+) is bound at residue D71. Zn(2+) is bound at residue C72. Residues D73 and D75 each contribute to the Mg(2+) site. Residues C88 and C95 each coordinate Zn(2+).

The protein belongs to the PRA-CH family. In terms of assembly, homodimer. It depends on Mg(2+) as a cofactor. Requires Zn(2+) as cofactor.

The protein localises to the cytoplasm. The catalysed reaction is 1-(5-phospho-beta-D-ribosyl)-5'-AMP + H2O = 1-(5-phospho-beta-D-ribosyl)-5-[(5-phospho-beta-D-ribosylamino)methylideneamino]imidazole-4-carboxamide. Its pathway is amino-acid biosynthesis; L-histidine biosynthesis; L-histidine from 5-phospho-alpha-D-ribose 1-diphosphate: step 3/9. In terms of biological role, catalyzes the hydrolysis of the adenine ring of phosphoribosyl-AMP. The polypeptide is Phosphoribosyl-AMP cyclohydrolase (Bacillus cereus (strain B4264)).